We begin with the raw amino-acid sequence, 159 residues long: 17 kDa surface antigen (159 aa).

Positions 1 to 19 are cleaved as a signal peptide; it reads MKIISKIIVILLAASMLQA. C20 carries the N-palmitoyl cysteine lipid modification. A lipid anchor (S-diacylglycerol cysteine) is attached at C20.

It belongs to the rickettsiale 17 kDa surface antigen family.

It localises to the cell outer membrane. The chain is 17 kDa surface antigen (omp) from Rickettsia bellii.